The following is a 165-amino-acid chain: uncharacterized protein (165 aa).

Belongs to the SixA phosphatase family.

This is an uncharacterized protein from Picosynechococcus sp. (strain ATCC 27264 / PCC 7002 / PR-6) (Agmenellum quadruplicatum).